Reading from the N-terminus, the 90-residue chain is Putative large ribosomal subunit protein uL23c (90 aa).

A coded by first part of gene region spans residues Met1–Glu46. The coded by second part of gene stretch occupies residues Met47–Thr90.

This sequence belongs to the universal ribosomal protein uL23 family. As to quaternary structure, part of the 50S ribosomal subunit.

The protein localises to the plastid. The protein resides in the chloroplast. Functionally, binds to 23S rRNA. This chain is Putative large ribosomal subunit protein uL23c (rpl23), found in Spinacia oleracea (Spinach).